Consider the following 362-residue polypeptide: Peptide chain release factor 1 (362 aa).

Glutamine 237 is subject to N5-methylglutamine.

It belongs to the prokaryotic/mitochondrial release factor family. Post-translationally, methylated by PrmC. Methylation increases the termination efficiency of RF1.

Its subcellular location is the cytoplasm. Functionally, peptide chain release factor 1 directs the termination of translation in response to the peptide chain termination codons UAG and UAA. The protein is Peptide chain release factor 1 of Vibrio campbellii (strain ATCC BAA-1116).